The following is a 529-amino-acid chain: Beta-galactoside alpha-2,6-sialyltransferase 2 (529 aa).

Topologically, residues 1-11 are cytoplasmic; it reads MKPHLKQWRQR. Residues 12–32 form a helical; Signal-anchor for type II membrane protein membrane-spanning segment; that stretch reads MLFGLFAGGLLFLLIFIYFTD. The Lumenal segment spans residues 33–529; the sequence is SNPAEPVPSS…PAPSPVIPHS (497 aa). The tract at residues 142-186 is disordered; that stretch reads SHSQGTLGFPSPGEPGPREGAFPAAQVQRRRVKKRHRRQRRSHVL. The span at 169 to 183 shows a compositional bias: basic residues; the sequence is QRRRVKKRHRRQRRS. N-linked (GlcNAc...) asparagine glycosylation is present at N211. 3 disulfides stabilise this stretch: C253/C519, C296/C448, and C466/C477.

Belongs to the glycosyltransferase 29 family.

It is found in the golgi apparatus. It localises to the golgi stack membrane. It catalyses the reaction a beta-D-galactoside + CMP-N-acetyl-beta-neuraminate = an N-acetyl-alpha-neuraminyl-(2-&gt;6)-beta-D-galactosyl derivative + CMP + H(+). Its function is as follows. Transfers sialic acid from the donor of substrate CMP-sialic acid to galactose containing acceptor substrates. Has alpha-2,6-sialyltransferase activity toward oligosaccharides that have the Gal-beta-1,4-GlcNAc sequence at the non-reducing end of their carbohydrate groups, but it has weak or no activities toward glycoproteins and glycolipids. In Pan troglodytes (Chimpanzee), this protein is Beta-galactoside alpha-2,6-sialyltransferase 2 (ST6GAL2).